We begin with the raw amino-acid sequence, 400 residues long: Argininosuccinate synthase (400 aa).

8–16 (AYSGGLDTS) provides a ligand contact to ATP. Tyr-87 lines the L-citrulline pocket. Gly-117 provides a ligand contact to ATP. L-aspartate is bound by residues Thr-119, Asn-123, and Asp-124. Residue Asn-123 coordinates L-citrulline. Residues Arg-127, Ser-175, Glu-260, and Tyr-272 each contribute to the L-citrulline site.

It belongs to the argininosuccinate synthase family. Type 1 subfamily. Homotetramer.

It localises to the cytoplasm. It carries out the reaction L-citrulline + L-aspartate + ATP = 2-(N(omega)-L-arginino)succinate + AMP + diphosphate + H(+). It functions in the pathway amino-acid biosynthesis; L-arginine biosynthesis; L-arginine from L-ornithine and carbamoyl phosphate: step 2/3. The sequence is that of Argininosuccinate synthase from Mycolicibacterium gilvum (strain PYR-GCK) (Mycobacterium gilvum (strain PYR-GCK)).